Reading from the N-terminus, the 163-residue chain is Phosphopantetheine adenylyltransferase (163 aa).

Ser11 contributes to the substrate binding site. ATP contacts are provided by residues 11–12 (SF) and His19. Substrate contacts are provided by Lys43, Leu75, and Arg89. ATP contacts are provided by residues 90–92 (GLR), Glu100, and 125–131 (YSFLSSS).

This sequence belongs to the bacterial CoaD family. Homohexamer. It depends on Mg(2+) as a cofactor.

It is found in the cytoplasm. It carries out the reaction (R)-4'-phosphopantetheine + ATP + H(+) = 3'-dephospho-CoA + diphosphate. It functions in the pathway cofactor biosynthesis; coenzyme A biosynthesis; CoA from (R)-pantothenate: step 4/5. In terms of biological role, reversibly transfers an adenylyl group from ATP to 4'-phosphopantetheine, yielding dephospho-CoA (dPCoA) and pyrophosphate. The protein is Phosphopantetheine adenylyltransferase of Lysinibacillus sphaericus (strain C3-41).